The following is a 429-amino-acid chain: UDP-N-acetylglucosamine 1-carboxyvinyltransferase (429 aa).

Residue 22–23 coordinates phosphoenolpyruvate; it reads KN. R102 serves as a coordination point for UDP-N-acetyl-alpha-D-glucosamine. C126 serves as the catalytic Proton donor. Position 126 is a 2-(S-cysteinyl)pyruvic acid O-phosphothioketal (C126). Residues 131–135, D316, and I338 contribute to the UDP-N-acetyl-alpha-D-glucosamine site; that span reads RPVDL.

It belongs to the EPSP synthase family. MurA subfamily.

Its subcellular location is the cytoplasm. It catalyses the reaction phosphoenolpyruvate + UDP-N-acetyl-alpha-D-glucosamine = UDP-N-acetyl-3-O-(1-carboxyvinyl)-alpha-D-glucosamine + phosphate. It functions in the pathway cell wall biogenesis; peptidoglycan biosynthesis. Functionally, cell wall formation. Adds enolpyruvyl to UDP-N-acetylglucosamine. In Methylobacterium sp. (strain 4-46), this protein is UDP-N-acetylglucosamine 1-carboxyvinyltransferase.